A 1030-amino-acid polypeptide reads, in one-letter code: Protein phosphatase 1 regulatory subunit 12A (1030 aa).

The short motif at 35 to 38 (KVKF) is the KVKF motif element. ANK repeat units lie at residues 39–68 (DDGAVFLAACSSGDTDEVLKLLHRGADINY), 72–101 (DGLTALHQACIDDNVDMVKFLVENGANINQ), 105–134 (EGWIPLHAAASCGYLDIAEFLIGQGAHVGA), 138–164 (EGDTPLDIAEEEAMEELLQNEVNRQGV), 198–227 (SGGTALHVAAAKGYTEVLKLLIQAGYDVNI), and 231–260 (DGWTPLHAAAHWGKEEACRILVDNLCDMEM). 2 positions are modified to (3S)-3-hydroxyasparagine; by HIF1AN; partial: Asn67 and Asn100. Residue Asn226 is modified to (3S)-3-hydroxyasparagine; by HIF1AN; partial. Disordered regions lie at residues 290–628 (LHSE…SVPT) and 643–928 (ASTT…EKDD). Positions 291 to 300 (HSEKRDKKSP) are enriched in basic and acidic residues. Residue Ser299 is modified to Phosphoserine. Residues 302-316 (IESTANMDNNQSQKT) are compositionally biased toward polar residues. Basic and acidic residues predominate over residues 318–340 (KNKETLIIEPEKNASRIESLEQE). Residues 357–369 (SEEDEEDDSESEA) show a composition bias toward acidic residues. The segment covering 385-402 (TSSTQAAPVAVTTPTVSS) has biased composition (low complexity). 2 positions are modified to phosphoserine: Ser422 and Ser432. Residues 422-432 (SPKEEERKDES) show a composition bias toward basic and acidic residues. Residue Thr443 is modified to Phosphothreonine. At Ser445 the chain carries Phosphoserine; by NUAK1. The residue at position 446 (Tyr446) is a Phosphotyrosine. Over residues 469-480 (RSASSPRLSSSL) the composition is skewed to low complexity. Residue Ser472 is modified to Phosphoserine; by NUAK1. Ser473 carries the phosphoserine; by CDK1 modification. Ser477 carries the phosphoserine modification. The segment covering 481 to 491 (DNKEKEKDSKG) has biased composition (basic and acidic residues). Residues Ser507 and Ser509 each carry the phosphoserine modification. Positions 540–551 (NSSVNEGSTYHK) are enriched in polar residues. The segment covering 564 to 610 (SSSVPSTTSTPTVTSAAGLQKSLLSSTSTTTKITTGSSSAGTQSSTS) has biased composition (low complexity). 2 positions are modified to phosphoserine: Ser601 and Ser618. Positions 614-625 (WAEDSTEKEKDS) are enriched in basic and acidic residues. The span at 643 to 660 (ASTTTLTTTTAGTVSSTT) shows a compositional bias: low complexity. Basic and acidic residues predominate over residues 673 to 682 (VRDEESESQR). The interaction with ROCK2 stretch occupies residues 682-864 (RKARSRQARQ…VSFWTQDSDE (183 aa)). Over residues 683–693 (KARSRQARQSR) the composition is skewed to basic residues. Residues Ser692 and Ser695 each carry the phosphoserine; by PKA and PKG; in vitro modification. Thr696 is subject to Phosphothreonine; by ROCK1, ROCK2, CDC42BP, ZIPK/DAPK3 and RAF1. The span at 718–767 (RTREQENEEKEKEEKEKQDKEKQEEKKESETSREDEYKQKYSRTYDETYQ) shows a compositional bias: basic and acidic residues. The span at 773-795 (STSSSTTPSSSLSTMSSSLYASS) shows a compositional bias: low complexity. Polar residues predominate over residues 796 to 810 (QLNRPNSLVGITSAY). Phosphoserine is present on Ser802. Over residues 814 to 840 (ITKENEREGEKREEEKEGEDKSQPKSI) the composition is skewed to basic and acidic residues. Residues 841–852 (RERRRPREKRRS) are compositionally biased toward basic residues. Ser852 carries the phosphoserine; by ROCK2 modification. Acidic residues predominate over residues 861-875 (DSDENEQEQQSDTEE). Ser862 and Ser871 each carry phosphoserine. Over residues 884-897 (TDSISRYETSSTSA) the composition is skewed to polar residues. Ser903 and Ser908 each carry phosphoserine. The segment covering 903–913 (SLLGRSGSYSY) has biased composition (low complexity). At Ser910 the chain carries Phosphoserine; by NUAK1. The segment covering 914–928 (LEERKPYSSRLEKDD) has biased composition (basic and acidic residues). Ser995 carries the post-translational modification Phosphoserine.

As to quaternary structure, PP1 comprises a catalytic subunit, PPP1CA, PPP1CB or PPP1CC, and one or several targeting or regulatory subunits. PPP1R12A mediates binding to myosin. Interacts with ARHA and CIT. Binds PPP1R12B, ROCK1 and IL16. Interacts directly with PRKG1. Non-covalent dimer of 2 dimers; PRKG1-PRKG1 and PPP1R12A-PPP1R12A. Interacts with SMTNL1. Interacts with PPP1CB; the interaction is direct. Interacts (when phosphorylated at Ser-445, Ser-472 and Ser-910) with 14-3-3. Interacts with ROCK1 and ROCK2. Interacts with isoform 1 and isoform 2 of ZIPK/DAPK3. Interacts with RAF1. Interacts with HIF1AN. Interacts with NCKAP1L. In terms of processing, phosphorylated by CIT (Rho-associated kinase). Phosphorylated cooperatively by ROCK1 and CDC42BP on Thr-696. Phosphorylated on upon DNA damage, probably by ATM or ATR. In vitro, phosphorylation of Ser-695 by PKA and PKG appears to prevent phosphorylation of the inhibitory site Thr-696, probably mediated by PRKG1. Phosphorylation at Ser-445, Ser-472 and Ser-910 by NUAK1 promotes interaction with 14-3-3, leading to inhibit interaction with myosin light chain MLC2, preventing dephosphorylation of MLC2. May be phosphorylated at Thr-696 by DMPK; may inhibit the myosin phosphatase activity. Phosphorylated at Ser-473 by CDK1 during mitosis, creating docking sites for the POLO box domains of PLK1. Subsequently, PLK1 binds and phosphorylates PPP1R12A. Expressed in striated muscles, specifically in type 2a fibers (at protein level).

The protein resides in the cytoplasm. It localises to the cytoskeleton. It is found in the stress fiber. In terms of biological role, key regulator of protein phosphatase 1C (PPP1C). Mediates binding to myosin. As part of the PPP1C complex, involved in dephosphorylation of PLK1. Capable of inhibiting HIF1AN-dependent suppression of HIF1A activity. This is Protein phosphatase 1 regulatory subunit 12A from Homo sapiens (Human).